The chain runs to 207 residues: MEPTAAPHPHLYLASQSPRRQELLRQIGVRFELLLADGDEDAEALEAVLLGETPDDYVQRVCALKAQAAARRRAARGLPARPILTSDTTVCLGGEILGKPADAADAHRMLRGMSGREHRVLTAVTVVTADGTPMHALSVSQVRFAVLTDVDIARYIASGEPFGKAGAYGIQGRAAAFVAHISGSYSGIMGLPLFETAALLAQAAITL.

Asp87 (proton acceptor) is an active-site residue.

It belongs to the Maf family. YhdE subfamily. Requires a divalent metal cation as cofactor.

The protein localises to the cytoplasm. The catalysed reaction is dTTP + H2O = dTMP + diphosphate + H(+). The enzyme catalyses UTP + H2O = UMP + diphosphate + H(+). Nucleoside triphosphate pyrophosphatase that hydrolyzes dTTP and UTP. May have a dual role in cell division arrest and in preventing the incorporation of modified nucleotides into cellular nucleic acids. This chain is dTTP/UTP pyrophosphatase, found in Ralstonia nicotianae (strain ATCC BAA-1114 / GMI1000) (Ralstonia solanacearum).